Here is an 883-residue protein sequence, read N- to C-terminus: Alanine--tRNA ligase (883 aa).

Zn(2+) is bound by residues histidine 564, histidine 568, cysteine 666, and histidine 670.

Belongs to the class-II aminoacyl-tRNA synthetase family. Requires Zn(2+) as cofactor.

The protein localises to the cytoplasm. It catalyses the reaction tRNA(Ala) + L-alanine + ATP = L-alanyl-tRNA(Ala) + AMP + diphosphate. Catalyzes the attachment of alanine to tRNA(Ala) in a two-step reaction: alanine is first activated by ATP to form Ala-AMP and then transferred to the acceptor end of tRNA(Ala). Also edits incorrectly charged Ser-tRNA(Ala) and Gly-tRNA(Ala) via its editing domain. The sequence is that of Alanine--tRNA ligase from Synechococcus sp. (strain JA-3-3Ab) (Cyanobacteria bacterium Yellowstone A-Prime).